The chain runs to 3391 residues: Genome polyprotein (3391 aa).

The interaction with host EXOC1 stretch occupies residues 1–15 (MNNQRKKAKNTPFNM). Topologically, residues 1 to 101 (MNNQRKKAKN…LNILNRRRRS (101 aa)) are cytoplasmic. The tract at residues 37–72 (MLQGRGPLKLFMALVAFLRFLTIPPTAGILKRWGTI) is hydrophobic; homodimerization of capsid protein C. A propeptide spans 101–114 (SAGMIIMLIPTVMA) (ER anchor for the capsid protein C, removed in mature form by serine protease NS3). A helical transmembrane segment spans residues 102 to 122 (AGMIIMLIPTVMAFHLTTRNG). Residues 123 to 238 (EPHMIVSRQE…GAWKHAQRIE (116 aa)) are Extracellular-facing. N-linked (GlcNAc...) asparagine; by host glycosylation is present at Asn183. Residues 239-259 (TWILRHPGFTIMAAILAYTIG) form a helical membrane-spanning segment. The Cytoplasmic portion of the chain corresponds to 260-265 (TTHFQR). A helical membrane pass occupies residues 266-280 (ALIFILLTAVAPSMT). The Extracellular portion of the chain corresponds to 281 to 725 (MRCIGISNRD…LHQVFGAIYG (445 aa)). Disulfide bonds link Cys283-Cys310, Cys340-Cys401, Cys354-Cys385, and Cys372-Cys396. Residue Asn347 is glycosylated (N-linked (GlcNAc...) asparagine; by host). The segment at 378-391 (DRGWGNGCGLFGKG) is fusion peptide. A glycan (N-linked (GlcNAc...) asparagine; by host) is linked at Asn433. Intrachain disulfides connect Cys465/Cys565 and Cys582/Cys613. Residues 726–746 (AAFSGVSWTMKILIGVIITWI) traverse the membrane as a helical segment. The Cytoplasmic segment spans residues 747-752 (GMNSRS). The chain crosses the membrane as a helical span at residues 753-773 (TSLSVSLVLVGIVTLYLGVMV). Residues 774–1195 (QADSGCVVSW…MVGATMTDDI (422 aa)) are Extracellular-facing. Cystine bridges form between Cys779-Cys790, Cys830-Cys918, Cys954-Cys998, Cys1055-Cys1104, Cys1066-Cys1088, and Cys1087-Cys1091. N-linked (GlcNAc...) asparagine; by host glycans are attached at residues Asn905 and Asn982. Asn1134 is a glycosylation site (N-linked (GlcNAc...) asparagine; by host). The chain crosses the membrane as a helical span at residues 1196–1220 (GMGVTYLALLAAFKVRPTFAAGLLL). Residues 1221–1226 (RKLTSK) are Cytoplasmic-facing. Residues 1227–1245 (ELMMTTIGIVLLSQSTIPE) form a helical membrane-spanning segment. Over 1246 to 1269 (TILELTDALALGMMVLKMVRNMEK) the chain is Lumenal. Residues 1270–1290 (YQLAVTIMAILCVPNAVILQN) traverse the membrane as a helical segment. Position 1291 (Ala1291) is a topological domain, cytoplasmic. Residues 1292-1310 (WKVSCTILAVVSVSPLLLT) form a helical membrane-spanning segment. Topologically, residues 1311–1317 (SSQQKTD) are lumenal. Residues 1318 to 1338 (WIPLALTIKGLNPTAIFLTTL) traverse the membrane as a helical segment. At 1339 to 1346 (SRTSKKRS) the chain is on the cytoplasmic side. The chain crosses the membrane as a helical span at residues 1347–1367 (WPLNEAIMAVGMVSILASSLL). Residues 1368-1370 (KND) lie on the Lumenal side of the membrane. A helical membrane pass occupies residues 1371–1391 (IPMTGPLVAGGLLTVCYVLTG). Residues 1392–1447 (RSADLELERAADVKWEDQAEISGSSPILSITISEDGSMSIKNEEEEQTLTILIRTG) are Cytoplasmic-facing. An interacts with and activates NS3 protease region spans residues 1398–1437 (LERAADVKWEDQAEISGSSPILSITISEDGSMSIKNEEEE). An intramembrane region (helical) is located at residues 1448–1468 (LLVISGLFPVSIPITAAAWYL). Topologically, residues 1469-2147 (WEVKKQRAGV…LSELPETLET (679 aa)) are cytoplasmic. Residues 1476-1653 (AGVLWDVPSP…EKSIEDNPEI (178 aa)) form the Peptidase S7 domain. Active-site charge relay system; for serine protease NS3 activity residues include His1526, Asp1550, and Ser1610. The Helicase ATP-binding domain maps to 1655–1811 (DDIFRKRRLT…QSNAPIIDEE (157 aa)). The tract at residues 1659-1662 (RKRR) is important for RNA-binding. An ATP-binding site is contributed by 1668–1675 (LHPGAGKT). The DEAH box motif lies at 1759 to 1762 (DEAH). A Helicase C-terminal domain is found at 1821-1988 (SGHEWVTDFK…IIPSMFEPER (168 aa)). Lys1863 carries the post-translational modification N6-acetyllysine; by host. A helical membrane pass occupies residues 2148–2168 (LLLLTLLATVTGGIFLFLMSG). Topologically, residues 2169–2170 (RG) are lumenal. The helical intramembrane region spans 2171–2191 (IGKMTLGMCCIITASVLLWYA). Gln2192 is a topological domain (lumenal). The helical transmembrane segment at 2193 to 2213 (IQPHWIAASIILEFFLIVLLI) threads the bilayer. The Cytoplasmic portion of the chain corresponds to 2214–2228 (PEPEKQRTPQDNQLT). Residues 2229 to 2249 (YVVIAILTVVAATMANEMGFL) form a helical membrane-spanning segment. Over 2250–2274 (EKTKKDLGLGSIATQQPESNILDID) the chain is Lumenal. The helical intramembrane region spans 2275-2295 (LRPASAWTLYAVATTFVTPML). Over 2296 to 2316 (RHSIENSSVNVSLTAIANQAT) the chain is Lumenal. 2 N-linked (GlcNAc...) asparagine; by host glycosylation sites follow: Asn2301 and Asn2305. The helical intramembrane region spans 2317–2337 (VLMGLGKGWPLSKMDIGVPLL). Topologically, residues 2338 to 2347 (AIGCYSQVNP) are lumenal. A helical transmembrane segment spans residues 2348–2368 (ITLTAALLLLVAHYAIIGPGL). At 2369 to 2413 (QAKATREAQKRAAAGIMKNPTVDGITVIDLDPIPYDPKFEKQLGQ) the chain is on the cytoplasmic side. The helical transmembrane segment at 2414 to 2434 (VMLLVLCVTQVLMMRTTWALC) threads the bilayer. Over 2435 to 2459 (EALTLATGPISTLWEGNPGRFWNTT) the chain is Lumenal. Asn2457 is a glycosylation site (N-linked (GlcNAc...) asparagine; by host). The helical transmembrane segment at 2460 to 2480 (IAVSMANIFRGSYLAGAGLLF) threads the bilayer. The Cytoplasmic portion of the chain corresponds to 2481-3391 (SIMKNTTNTR…REEEEAGVLW (911 aa)). One can recognise an mRNA cap 0-1 NS5-type MT domain in the interval 2493–2755 (TGNIGETLGE…DVDLGSGTRN (263 aa)). Ser2547 serves as a coordination point for S-adenosyl-L-methionine. Ser2547 is subject to Phosphoserine. Lys2552 (for 2'-O-MTase activity) is an active-site residue. The short motif at 2568 to 2571 (VVDL) is the SUMO-interacting motif element. 6 residues coordinate S-adenosyl-L-methionine: Gly2577, Trp2578, Thr2595, Lys2596, Asp2622, and Val2623. Asp2637 (for 2'-O-MTase activity) is an active-site residue. Ile2638 lines the S-adenosyl-L-methionine pocket. Residues Lys2672 and Glu2708 each act as for 2'-O-MTase activity in the active site. Residue Tyr2710 participates in S-adenosyl-L-methionine binding. Glu2929, His2933, Cys2938, and Cys2941 together coordinate Zn(2+). Positions 3020-3169 (AMYADDTAGW…PLDDRFASAL (150 aa)) constitute a RdRp catalytic domain. Zn(2+) contacts are provided by His3203, Cys3219, and Cys3338.

This sequence in the N-terminal section; belongs to the class I-like SAM-binding methyltransferase superfamily. mRNA cap 0-1 NS5-type methyltransferase family. In terms of assembly, homodimer. Interacts (via N-terminus) with host EXOC1 (via C-terminus); this interaction results in EXOC1 degradation through the proteasome degradation pathway. As to quaternary structure, forms heterodimers with envelope protein E in the endoplasmic reticulum and Golgi. Homodimer; in the endoplasmic reticulum and Golgi. Interacts with protein prM. Interacts with non-structural protein 1. In terms of assembly, homodimer; Homohexamer when secreted. Interacts with envelope protein E. Interacts with host PRKAA1. As to quaternary structure, interacts (via N-terminus) with serine protease NS3. Forms a heterodimer with serine protease NS3. May form homooligomers. In terms of assembly, forms a heterodimer with NS2B. Interacts with NS4B. Interacts with unphosphorylated RNA-directed RNA polymerase NS5; this interaction stimulates RNA-directed RNA polymerase NS5 guanylyltransferase activity. Interacts with host SHFL. As to quaternary structure, interacts with host MAVS; this interaction inhibits the synthesis of IFN-beta. Interacts with host SHFL. Interacts with host AUP1; the interaction occurs in the presence of Dengue virus NS4B and induces lipophagy which facilitates production of virus progeny particles. May interact with host SRPRA and SEC61G. Interacts with serine protease NS3. In terms of assembly, homodimer. Interacts with host STAT2; this interaction inhibits the phosphorylation of the latter, and, when all viral proteins are present (polyprotein), targets STAT2 for degradation. Interacts with serine protease NS3. Interacts with host PAF1 complex; the interaction may prevent the recruitment of the PAF1 complex to interferon-responsive genes, and thus reduces the immune response. Specific enzymatic cleavages in vivo yield mature proteins. Cleavages in the lumen of endoplasmic reticulum are performed by host signal peptidase, whereas cleavages in the cytoplasmic side are performed by serine protease NS3. Signal cleavage at the 2K-4B site requires a prior NS3 protease-mediated cleavage at the 4A-2K site. In terms of processing, cleaved in post-Golgi vesicles by a host furin, releasing the mature small envelope protein M, and peptide pr. This cleavage is incomplete as up to 30% of viral particles still carry uncleaved prM. Post-translationally, N-glycosylated. N-glycosylated. The excreted form is glycosylated and this is required for efficient secretion of the protein from infected cells. In terms of processing, acetylated by host KAT5. Acetylation modulates NS3 RNA-binding and unwinding activities and plays an important positive role for viral replication. Post-translationally, phosphorylated on serines residues. This phosphorylation may trigger NS5 nuclear localization. Sumoylation of RNA-directed RNA polymerase NS5 increases NS5 protein stability allowing proper viral RNA replication.

Its subcellular location is the virion. It is found in the host nucleus. The protein resides in the host cytoplasm. The protein localises to the host perinuclear region. It localises to the secreted. Its subcellular location is the virion membrane. It is found in the host endoplasmic reticulum membrane. The protein resides in the host mitochondrion. It catalyses the reaction Selective hydrolysis of -Xaa-Xaa-|-Yaa- bonds in which each of the Xaa can be either Arg or Lys and Yaa can be either Ser or Ala.. The catalysed reaction is RNA(n) + a ribonucleoside 5'-triphosphate = RNA(n+1) + diphosphate. It carries out the reaction a ribonucleoside 5'-triphosphate + H2O = a ribonucleoside 5'-diphosphate + phosphate + H(+). The enzyme catalyses ATP + H2O = ADP + phosphate + H(+). It catalyses the reaction a 5'-end (5'-triphosphoguanosine)-ribonucleoside in mRNA + S-adenosyl-L-methionine = a 5'-end (N(7)-methyl 5'-triphosphoguanosine)-ribonucleoside in mRNA + S-adenosyl-L-homocysteine. The catalysed reaction is a 5'-end (N(7)-methyl 5'-triphosphoguanosine)-ribonucleoside in mRNA + S-adenosyl-L-methionine = a 5'-end (N(7)-methyl 5'-triphosphoguanosine)-(2'-O-methyl-ribonucleoside) in mRNA + S-adenosyl-L-homocysteine + H(+). Plays a role in virus budding by binding to the cell membrane and gathering the viral RNA into a nucleocapsid that forms the core of a mature virus particle. During virus entry, may induce genome penetration into the host cytoplasm after hemifusion induced by the surface proteins. Can migrate to the cell nucleus where it modulates host functions. Overcomes the anti-viral effects of host EXOC1 by sequestering and degrading the latter through the proteasome degradation pathway. In terms of biological role, inhibits RNA silencing by interfering with host Dicer. Its function is as follows. Prevents premature fusion activity of envelope proteins in trans-Golgi by binding to envelope protein E at pH6.0. After virion release in extracellular space, gets dissociated from E dimers. Functionally, acts as a chaperone for envelope protein E during intracellular virion assembly by masking and inactivating envelope protein E fusion peptide. prM is the only viral peptide matured by host furin in the trans-Golgi network probably to avoid catastrophic activation of the viral fusion activity in acidic Golgi compartment prior to virion release. prM-E cleavage is inefficient, and many virions are only partially matured. These uncleaved prM would play a role in immune evasion. May play a role in virus budding. Exerts cytotoxic effects by activating a mitochondrial apoptotic pathway through M ectodomain. May display a viroporin activity. In terms of biological role, binds to host cell surface receptor and mediates fusion between viral and cellular membranes. Envelope protein is synthesized in the endoplasmic reticulum in the form of heterodimer with protein prM. They play a role in virion budding in the ER, and the newly formed immature particle is covered with 60 spikes composed of heterodimer between precursor prM and envelope protein E. The virion is transported to the Golgi apparatus where the low pH causes dissociation of PrM-E heterodimers and formation of E homodimers. prM-E cleavage is inefficient, and many virions are only partially matured. These uncleaved prM would play a role in immune evasion. Its function is as follows. Involved in immune evasion, pathogenesis and viral replication. Once cleaved off the polyprotein, is targeted to three destinations: the viral replication cycle, the plasma membrane and the extracellular compartment. Essential for viral replication. Required for formation of the replication complex and recruitment of other non-structural proteins to the ER-derived membrane structures. Excreted as a hexameric lipoparticle that plays a role against host immune response. Antagonizing the complement function. Binds to the host macrophages and dendritic cells. Inhibits signal transduction originating from Toll-like receptor 3 (TLR3). Mediates complement activation, which may contribute to the pathogenesis of the vascular leakage that occurs in severe dengue disease. Activates autophagy through the AMPK/ERK/mTOR signaling pathway. Mechanistically, acts as the assembly platform for STK11-AMPK interactions and promotes STK11-AMPK interactions. In turn, promotes phosphorylation of the AMPK kinase structural domain and activates AMPK, thereby positively regulating the AMPK/ERK/mTOR signaling pathway and inducing autophagy. Functionally, disrupts the host endothelial glycocalyx layer of host pulmonary microvascular endothelial cells, inducing degradation of sialic acid and shedding of heparan sulfate proteoglycans. NS1 induces expression of sialidases, heparanase, and activates cathepsin L, which activates heparanase via enzymatic cleavage. These effects are probably linked to the endothelial hyperpermeability observed in severe dengue disease. Component of the viral RNA replication complex that functions in virion assembly and antagonizes the host immune response. In terms of biological role, required cofactor for the serine protease function of NS3. May have membrane-destabilizing activity and form viroporins. Its function is as follows. Displays three enzymatic activities: serine protease, NTPase and RNA helicase. NS3 serine protease, in association with NS2B, performs its autocleavage and cleaves the polyprotein at dibasic sites in the cytoplasm: C-prM, NS2A-NS2B, NS2B-NS3, NS3-NS4A, NS4A-2K and NS4B-NS5. NS3 RNA helicase binds RNA and unwinds dsRNA in the 3' to 5' direction. Functionally, regulates the ATPase activity of the NS3 helicase activity. NS4A allows NS3 helicase to conserve energy during unwinding. Plays a role in the inhibition of the host innate immune response. Interacts with host MAVS and thereby prevents the interaction between RIGI and MAVS. In turn, IFN-beta production is impaired. Interacts with host AUP1 which mediates induction of lipophagy in host cells and facilitates production of virus progeny particles. Functions as a signal peptide for NS4B and is required for the interferon antagonism activity of the latter. In terms of biological role, induces the formation of ER-derived membrane vesicles where the viral replication takes place. Inhibits interferon (IFN)-induced host STAT1 phosphorylation and nuclear translocation, thereby preventing the establishment of cellular antiviral state by blocking the IFN-alpha/beta pathway. Its function is as follows. Replicates the viral (+) and (-) RNA genome, and performs the capping of genomes in the cytoplasm. NS5 methylates viral RNA cap at guanine N-7 and ribose 2'-O positions. Besides its role in RNA genome replication, also prevents the establishment of cellular antiviral state by blocking the interferon-alpha/beta (IFN-alpha/beta) signaling pathway. Inhibits host TYK2 and STAT2 phosphorylation, thereby preventing activation of JAK-STAT signaling pathway. May reduce immune responses by preventing the recruitment of the host PAF1 complex to interferon-responsive genes. This is Genome polyprotein from Aedimorphus (Red guenon).